The chain runs to 169 residues: Positive control factor (169 aa).

The H-T-H motif DNA-binding region spans 132–157 (YERIADLLGVKKSTVQTTIKRASLKM).

In terms of biological role, positive regulatory protein that acts at the late promoter PL. The sequence is that of Positive control factor (xpf) from Bacillus subtilis (strain 168).